The following is a 96-amino-acid chain: Putative pterin-4-alpha-carbinolamine dehydratase (96 aa).

The protein belongs to the pterin-4-alpha-carbinolamine dehydratase family.

The catalysed reaction is (4aS,6R)-4a-hydroxy-L-erythro-5,6,7,8-tetrahydrobiopterin = (6R)-L-erythro-6,7-dihydrobiopterin + H2O. The chain is Putative pterin-4-alpha-carbinolamine dehydratase from Prochlorococcus marinus subsp. pastoris (strain CCMP1986 / NIES-2087 / MED4).